We begin with the raw amino-acid sequence, 125 residues long: Small ribosomal subunit protein uS13 (125 aa).

Residues 91–125 are disordered; that stretch reads HRRGLPARGQRTRTNARTRKGKRKTVAGKKKAGKK.

This sequence belongs to the universal ribosomal protein uS13 family. As to quaternary structure, part of the 30S ribosomal subunit. Forms a loose heterodimer with protein S19. Forms two bridges to the 50S subunit in the 70S ribosome.

Located at the top of the head of the 30S subunit, it contacts several helices of the 16S rRNA. In the 70S ribosome it contacts the 23S rRNA (bridge B1a) and protein L5 of the 50S subunit (bridge B1b), connecting the 2 subunits; these bridges are implicated in subunit movement. Contacts the tRNAs in the A and P-sites. In Chloroherpeton thalassium (strain ATCC 35110 / GB-78), this protein is Small ribosomal subunit protein uS13.